The following is a 215-amino-acid chain: Adenylate kinase (215 aa).

10–15 (GSGKGT) serves as a coordination point for ATP. The segment at 30–59 (STGDLFRTNIENDTPLGKEIKQIVENGQLV) is NMP. AMP contacts are provided by residues threonine 31, arginine 36, 57-59 (QLV), 85-88 (GFPR), and glutamine 92. An LID region spans residues 121-158 (GRRICQSCCKIFNIYTLPTKEKEICDFCQGILYQRKDD). Arginine 122 contacts ATP. Zn(2+)-binding residues include cysteine 125 and cysteine 128. 131-132 (IF) lines the ATP pocket. Positions 145 and 148 each coordinate Zn(2+). Residues arginine 155 and arginine 166 each coordinate AMP. An ATP-binding site is contributed by lysine 194.

This sequence belongs to the adenylate kinase family. Monomer.

The protein localises to the cytoplasm. The enzyme catalyses AMP + ATP = 2 ADP. It participates in purine metabolism; AMP biosynthesis via salvage pathway; AMP from ADP: step 1/1. Its function is as follows. Catalyzes the reversible transfer of the terminal phosphate group between ATP and AMP. Plays an important role in cellular energy homeostasis and in adenine nucleotide metabolism. This is Adenylate kinase from Borrelia recurrentis (strain A1).